A 412-amino-acid chain; its full sequence is [Pyruvate dehydrogenase (acetyl-transferring)] kinase isozyme 4, mitochondrial (412 aa).

One can recognise a Histidine kinase domain in the interval 138–368; the sequence is ILEYKDNCTV…DAIIYLKALS (231 aa). ATP-binding positions include 254–261, Asp-293, 312–313, and 329–334; these read ELFKNAMR, ST, and GFGYGL.

Belongs to the PDK/BCKDK protein kinase family. Homodimer. Interacts with the pyruvate dehydrogenase complex subunit DLAT, and is part of the multimeric pyruvate dehydrogenase complex that contains multiple copies of pyruvate dehydrogenase (E1), dihydrolipoamide acetyltransferase (DLAT, E2) and lipoamide dehydrogenase (DLD, E3). As to expression, ubiquitous; highest levels of expression in heart and skeletal muscle.

It localises to the mitochondrion matrix. The enzyme catalyses L-seryl-[pyruvate dehydrogenase E1 alpha subunit] + ATP = O-phospho-L-seryl-[pyruvate dehydrogenase E1 alpha subunit] + ADP + H(+). Functionally, kinase that plays a key role in regulation of glucose and fatty acid metabolism and homeostasis via phosphorylation of the pyruvate dehydrogenase subunits PDHA1 and PDHA2. This inhibits pyruvate dehydrogenase activity, and thereby regulates metabolite flux through the tricarboxylic acid cycle, down-regulates aerobic respiration and inhibits the formation of acetyl-coenzyme A from pyruvate. Inhibition of pyruvate dehydrogenase decreases glucose utilization and increases fat metabolism in response to prolonged fasting and starvation. Plays an important role in maintaining normal blood glucose levels under starvation, and is involved in the insulin signaling cascade. Via its regulation of pyruvate dehydrogenase activity, plays an important role in maintaining normal blood pH and in preventing the accumulation of ketone bodies under starvation. In the fed state, mediates cellular responses to glucose levels and to a high-fat diet. Regulates both fatty acid oxidation and de novo fatty acid biosynthesis. Plays a role in the generation of reactive oxygen species. Protects detached epithelial cells against anoikis. Plays a role in cell proliferation via its role in regulating carbohydrate and fatty acid metabolism. In Rattus norvegicus (Rat), this protein is [Pyruvate dehydrogenase (acetyl-transferring)] kinase isozyme 4, mitochondrial (Pdk4).